The following is a 115-amino-acid chain: Large ribosomal subunit protein bL20 (115 aa).

The protein belongs to the bacterial ribosomal protein bL20 family.

In terms of biological role, binds directly to 23S ribosomal RNA and is necessary for the in vitro assembly process of the 50S ribosomal subunit. It is not involved in the protein synthesizing functions of that subunit. This is Large ribosomal subunit protein bL20 from Prochlorococcus marinus (strain NATL2A).